We begin with the raw amino-acid sequence, 245 residues long: Dehydrogenase/reductase SDR family member 6 (245 aa).

Residues 16 to 18 (QGI), Asp37, and Asp58 each bind NAD(+). Arg144 is a binding site for substrate. The Proton acceptor role is filled by Tyr147. NAD(+) contacts are provided by residues Lys151 and 180–184 (VDTPS). Substrate contacts are provided by Arg188 and Arg205.

The protein belongs to the short-chain dehydrogenases/reductases (SDR) family. Homotetramer.

The protein resides in the cytoplasm. The enzyme catalyses cis-4-hydroxy-L-proline + NAD(+) = 4-oxo-L-proline + NADH + H(+). The catalysed reaction is (R)-3-hydroxybutanoate + NAD(+) = acetoacetate + NADH + H(+). It participates in amino-acid metabolism. Its pathway is siderophore biosynthesis. Functionally, NAD(H)-dependent dehydrogenase/reductase with a preference for cyclic substrates. Catalyzes stereoselective conversion of 4-oxo-L-proline to cis-4-hydroxy-L-proline, likely a detoxification mechanism for ketoprolines. Mediates the formation of 2,5-dihydroxybenzoate (2,5-DHBA), a siderophore that chelates free cytoplasmic iron, thereby regulating iron transport and homeostasis while protecting cells against free radical-induced oxidative stress. The iron-siderophore complex is imported into mitochondria, providing an iron source for mitochondrial metabolic processes in particular heme synthesis. May act as a 3-hydroxybutyrate dehydrogenase. This is Dehydrogenase/reductase SDR family member 6 (bdh2) from Danio rerio (Zebrafish).